The sequence spans 446 residues: Methylenetetrahydrofolate--tRNA-(uracil-5-)-methyltransferase TrmFO (446 aa).

Position 11–16 (11–16 (GGGLAG)) interacts with FAD.

It belongs to the MnmG family. TrmFO subfamily. FAD serves as cofactor.

The protein localises to the cytoplasm. It carries out the reaction uridine(54) in tRNA + (6R)-5,10-methylene-5,6,7,8-tetrahydrofolate + NADH + H(+) = 5-methyluridine(54) in tRNA + (6S)-5,6,7,8-tetrahydrofolate + NAD(+). The catalysed reaction is uridine(54) in tRNA + (6R)-5,10-methylene-5,6,7,8-tetrahydrofolate + NADPH + H(+) = 5-methyluridine(54) in tRNA + (6S)-5,6,7,8-tetrahydrofolate + NADP(+). Functionally, catalyzes the folate-dependent formation of 5-methyl-uridine at position 54 (M-5-U54) in all tRNAs. In Oleidesulfovibrio alaskensis (strain ATCC BAA-1058 / DSM 17464 / G20) (Desulfovibrio alaskensis), this protein is Methylenetetrahydrofolate--tRNA-(uracil-5-)-methyltransferase TrmFO.